A 507-amino-acid chain; its full sequence is (6-4) photolyase (507 aa).

6,7-dimethyl-8-(1-D-ribityl)lumazine contacts are provided by residues Gly9–Asp10, Cys32–Tyr40, and Gly105. FAD is bound by residues His265–Ser269 and Asn273. A [4Fe-4S] cluster-binding site is contributed by Cys350. Residues Tyr363–His366, Asp397, and Asn406 each bind FAD. [4Fe-4S] cluster is bound by residues Cys438, Cys441, and Cys454.

It belongs to the iron-sulfur bacterial cryptochrome/photolyase (FeS-BCP) family. FAD serves as cofactor. Requires 6,7-dimethyl-8-(1-D-ribityl)lumazine as cofactor. [4Fe-4S] cluster is required as a cofactor.

It carries out the reaction (6-4) photoproduct (in DNA) = 2 pyrimidine residues (in DNA).. Functionally, photolyase involved in the repair of UV-induced (6-4) lesions in DNA. Catalyzes the photoreactivation of (6-4) pyrimidine-pyrimidone photoproducts by using blue-light energy. Can repair (6-4) photoproducts in ssDNA as well as in dsDNA. This chain is (6-4) photolyase, found in Agrobacterium fabrum (strain C58 / ATCC 33970) (Agrobacterium tumefaciens (strain C58)).